A 163-amino-acid chain; its full sequence is Photosystem II extrinsic protein V (163 aa).

The signal sequence occupies residues 1-26 (MFRRLIGVVVATVLLSFQLLVGSATA). Residues C63, C66, H67, and H118 each contribute to the heme c site.

It belongs to the cytochrome c family. PsbV subfamily. In terms of assembly, PSII is composed of 1 copy each of membrane proteins PsbA, PsbB, PsbC, PsbD, PsbE, PsbF, PsbH, PsbI, PsbJ, PsbK, PsbL, PsbM, PsbT, PsbX, PsbY, PsbZ, Psb30/Ycf12, peripheral proteins PsbO, CyanoQ (PsbQ), PsbU, PsbV and a large number of cofactors. It forms dimeric complexes. The cofactor is heme c.

The protein localises to the cellular thylakoid membrane. One of the extrinsic, lumenal subunits of photosystem II (PSII). PSII is a light-driven water plastoquinone oxidoreductase, using light energy to abstract electrons from H(2)O, generating a proton gradient subsequently used for ATP formation. The extrinsic proteins stabilize the structure of photosystem II oxygen-evolving complex (OEC), the ion environment of oxygen evolution and protect the OEC against heat-induced inactivation. Low-potential cytochrome c that plays a role in the OEC of PSII. In Nostoc punctiforme (strain ATCC 29133 / PCC 73102), this protein is Photosystem II extrinsic protein V.